Here is a 278-residue protein sequence, read N- to C-terminus: Protein irg-2 (278 aa).

Positions 152 to 179 are disordered; the sequence is NSIRGQPFKSLQPENRTPTQVTGHQQES. Positions 163 to 179 are enriched in polar residues; that stretch reads QPENRTPTQVTGHQQES.

In terms of biological role, plays a role in innate immunity by conferring resistance to virulent strains of the Gram-negative bacterium P.aeruginosa via the zip-2 pathway and independent of the pmk-1 p38MAPK pathway. Induced as part of several immune responses to translational inhibition arising from endocytosis of ToxA during P.aeruginosa infection or exposure to exogenous cycloheximide. The chain is Protein irg-2 from Caenorhabditis elegans.